A 93-amino-acid polypeptide reads, in one-letter code: Large ribosomal subunit protein uL23cz/uL23cy (93 aa).

This sequence belongs to the universal ribosomal protein uL23 family. Part of the 50S ribosomal subunit.

Its subcellular location is the plastid. The protein resides in the chloroplast. In terms of biological role, binds to 23S rRNA. This Nandina domestica (Heavenly bamboo) protein is Large ribosomal subunit protein uL23cz/uL23cy (rpl23-A).